Reading from the N-terminus, the 300-residue chain is tRNA dimethylallyltransferase (300 aa).

An ATP-binding site is contributed by 11–18 (GPTAVGKS). 13 to 18 (TAVGKS) is a substrate binding site. The interaction with substrate tRNA stretch occupies residues 35-38 (DSIQ).

The protein belongs to the IPP transferase family. Monomer. It depends on Mg(2+) as a cofactor.

It catalyses the reaction adenosine(37) in tRNA + dimethylallyl diphosphate = N(6)-dimethylallyladenosine(37) in tRNA + diphosphate. Functionally, catalyzes the transfer of a dimethylallyl group onto the adenine at position 37 in tRNAs that read codons beginning with uridine, leading to the formation of N6-(dimethylallyl)adenosine (i(6)A). The sequence is that of tRNA dimethylallyltransferase from Borrelia recurrentis (strain A1).